The sequence spans 267 residues: MDVDERLHQDENQTHPFSQKKSSSFLIKEKAATKSKDLEHIRLRDLNFNHRKKLDDKKLAKQIPVKANFKKPNEIEARANLNSNELTDINLDYIPDSPSIEKISGPEDSIVVTPRNIIHLQSDSDIILEECEHNYDCSPFYRLFNYENRIEPDDYEAIINAIITDEIAGTYPVFERELEYQELKSLVRKRDYIMYYFLSRDYRGFFQLKEERTLFYRYPSIAYTSPLRYLDNGSETEQFTGDDDEELQSFDFENTSSVRTLDSNIWR.

Residues 1–13 are compositionally biased toward basic and acidic residues; the sequence is MDVDERLHQDENQ. The tract at residues 1-26 is disordered; the sequence is MDVDERLHQDENQTHPFSQKKSSSFL. The segment covering 14-25 has biased composition (polar residues); it reads THPFSQKKSSSF.

Functionally, indispensable for spore formation. The chain is Meiosis-specific protein ISC10 (ISC10) from Saccharomyces cerevisiae (strain ATCC 204508 / S288c) (Baker's yeast).